The following is a 638-amino-acid chain: DNA mismatch repair protein MutL (638 aa).

The interval 398–435 (GREGTSFGTQTNAFGSMATPRDNSRGSYSAGESRQRTE) is disordered.

It belongs to the DNA mismatch repair MutL/HexB family.

In terms of biological role, this protein is involved in the repair of mismatches in DNA. It is required for dam-dependent methyl-directed DNA mismatch repair. May act as a 'molecular matchmaker', a protein that promotes the formation of a stable complex between two or more DNA-binding proteins in an ATP-dependent manner without itself being part of a final effector complex. The sequence is that of DNA mismatch repair protein MutL from Shewanella baltica (strain OS155 / ATCC BAA-1091).